The following is a 331-amino-acid chain: Vacuolar protein sorting-associated protein 26B (331 aa).

The segment at Ala310–Asp331 is disordered.

It belongs to the VPS26 family. Component of the heterotrimeric retromer cargo-selective complex (CSC) which is believed to associate with variable sorting nexins to form functionally distinct retromer complex variants.

Its subcellular location is the cytoplasm. It is found in the membrane. It localises to the endosome. Functionally, acts as a component of the retromer cargo-selective complex (CSC). The CSC is believed to be the core functional component of retromer or respective retromer complex variants acting to prevent missorting of selected transmembrane cargo proteins into the lysosomal degradation pathway. Retromer mediates retrograde transport of cargo proteins from endosomes to the trans-Golgi network (TGN). This is Vacuolar protein sorting-associated protein 26B (vps26b) from Danio rerio (Zebrafish).